A 287-amino-acid polypeptide reads, in one-letter code: Nucleotide-binding protein Ajs_0902 (287 aa).

ATP is bound at residue 10 to 17 (GMSGSGKS). Residue 59 to 62 (DVRS) coordinates GTP.

The protein belongs to the RapZ-like family.

In terms of biological role, displays ATPase and GTPase activities. In Acidovorax sp. (strain JS42), this protein is Nucleotide-binding protein Ajs_0902.